A 439-amino-acid chain; its full sequence is Proline--tRNA ligase (439 aa).

The protein belongs to the class-II aminoacyl-tRNA synthetase family. ProS type 2 subfamily. In terms of assembly, homodimer.

It is found in the cytoplasm. It carries out the reaction tRNA(Pro) + L-proline + ATP = L-prolyl-tRNA(Pro) + AMP + diphosphate. Catalyzes the attachment of proline to tRNA(Pro) in a two-step reaction: proline is first activated by ATP to form Pro-AMP and then transferred to the acceptor end of tRNA(Pro). The polypeptide is Proline--tRNA ligase (Rhodopseudomonas palustris (strain BisB18)).